A 304-amino-acid chain; its full sequence is Putative S-adenosyl-L-methionine-dependent methyltransferase MAV_1058 (304 aa).

S-adenosyl-L-methionine-binding positions include Asp128 and 157 to 158; that span reads DL.

The protein belongs to the UPF0677 family.

Its function is as follows. Exhibits S-adenosyl-L-methionine-dependent methyltransferase activity. The polypeptide is Putative S-adenosyl-L-methionine-dependent methyltransferase MAV_1058 (Mycobacterium avium (strain 104)).